A 94-amino-acid chain; its full sequence is Co-chaperonin GroES (94 aa).

Belongs to the GroES chaperonin family. As to quaternary structure, heptamer of 7 subunits arranged in a ring. Interacts with the chaperonin GroEL.

The protein resides in the cytoplasm. Its function is as follows. Together with the chaperonin GroEL, plays an essential role in assisting protein folding. The GroEL-GroES system forms a nano-cage that allows encapsulation of the non-native substrate proteins and provides a physical environment optimized to promote and accelerate protein folding. GroES binds to the apical surface of the GroEL ring, thereby capping the opening of the GroEL channel. In Clostridium botulinum, this protein is Co-chaperonin GroES.